Here is a 422-residue protein sequence, read N- to C-terminus: ORC1-type DNA replication protein 13 (422 aa).

Residues 80 to 84, Y231, and R243 each bind ATP; that span reads TGKTL.

This sequence belongs to the CDC6/cdc18 family.

Functionally, involved in regulation of DNA replication. This Haloarcula marismortui (strain ATCC 43049 / DSM 3752 / JCM 8966 / VKM B-1809) (Halobacterium marismortui) protein is ORC1-type DNA replication protein 13 (cdc6m).